The following is a 362-amino-acid chain: Chorismate synthase (362 aa).

NADP(+)-binding residues include arginine 48 and arginine 54. Residues 125–127 (RSS), 238–239 (NA), glycine 278, 293–297 (KPTSS), and arginine 319 contribute to the FMN site.

Belongs to the chorismate synthase family. Homotetramer. Requires FMNH2 as cofactor.

The catalysed reaction is 5-O-(1-carboxyvinyl)-3-phosphoshikimate = chorismate + phosphate. Its pathway is metabolic intermediate biosynthesis; chorismate biosynthesis; chorismate from D-erythrose 4-phosphate and phosphoenolpyruvate: step 7/7. Functionally, catalyzes the anti-1,4-elimination of the C-3 phosphate and the C-6 proR hydrogen from 5-enolpyruvylshikimate-3-phosphate (EPSP) to yield chorismate, which is the branch point compound that serves as the starting substrate for the three terminal pathways of aromatic amino acid biosynthesis. This reaction introduces a second double bond into the aromatic ring system. The sequence is that of Chorismate synthase from Aeromonas salmonicida (strain A449).